The primary structure comprises 743 residues: Serine/threonine-protein kinase GD17699 (743 aa).

The interval 54 to 78 (NVQEDNSYNRDCDSPVSSSSEPEKE) is disordered. 2 Doublecortin domains span residues 154–240 (LRIK…VEYN) and 309–392 (RIVT…AEDF). A Protein kinase domain is found at 473–731 (YTLGRIIGDG…SEDILDHPWT (259 aa)). Residues 479–487 (IGDGNFAIV) and Lys-502 contribute to the ATP site. Catalysis depends on Asp-594, which acts as the Proton acceptor.

The protein belongs to the protein kinase superfamily. CAMK Ser/Thr protein kinase family. CaMK subfamily.

The enzyme catalyses L-seryl-[protein] + ATP = O-phospho-L-seryl-[protein] + ADP + H(+). The catalysed reaction is L-threonyl-[protein] + ATP = O-phospho-L-threonyl-[protein] + ADP + H(+). In Drosophila simulans (Fruit fly), this protein is Serine/threonine-protein kinase GD17699.